The sequence spans 166 residues: Lithostathine-1-alpha (166 aa).

The signal sequence occupies residues 1 to 22 (MAQTSSYFMLISCLMFLSQSQG). Residue Gln23 is modified to Pyrrolidone carboxylic acid. The O-linked (GalNAc) threonine glycan is linked to Thr27. A C-type lectin domain is found at 34 to 164 (ISCPEGTNAY…EDKFSFVCKF (131 aa)). Disulfide bonds link Cys36–Cys47, Cys64–Cys162, and Cys137–Cys154.

The composition of the O-linked carbohydrate on Thr-27 is complex and varied. In the crystallographic structure, the attached sugar appears to be N-acetylglucosamine, typical of an intracellular protein, rather than N-acetylgalactosamine. As to expression, in pancreatic acinar cells and, in lower levels, in brain. Enhanced expression of PSP-related transcripts and intraneuronal accumulation of PSP-like proteins is found in brain from Alzheimer disease and Down syndrome patients.

It is found in the secreted. Functionally, might act as an inhibitor of spontaneous calcium carbonate precipitation. May be associated with neuronal sprouting in brain, and with brain and pancreas regeneration. This Homo sapiens (Human) protein is Lithostathine-1-alpha (REG1A).